Reading from the N-terminus, the 772-residue chain is Mitochondrial intermediate peptidase (772 aa).

The transit peptide at 1–33 directs the protein to the mitochondrion; it reads MLARPSTTVLARRPFFRFRGCLNEPRPTKARCL. His-556 contacts Zn(2+). Glu-557 is an active-site residue. Positions 560 and 563 each coordinate Zn(2+).

It belongs to the peptidase M3 family. Zn(2+) is required as a cofactor.

It is found in the mitochondrion matrix. It catalyses the reaction Release of an N-terminal octapeptide as second stage of processing of some proteins imported into the mitochondrion.. Functionally, cleaves proteins, imported into the mitochondrion, to their mature size. While most mitochondrial precursor proteins are processed to the mature form in one step by mitochondrial processing peptidase (MPP), the sequential cleavage by MIP of an octapeptide after initial processing by MPP is a required step for a subgroup of nuclear-encoded precursor proteins destined for the matrix or the inner membrane. The sequence is that of Mitochondrial intermediate peptidase (OCT1) from Coprinopsis scobicola (Ink cap fungus).